The chain runs to 87 residues: uncharacterized protein (87 aa).

A helical membrane pass occupies residues 63 to 83 (IVLALVLGVFSLVGLIFIIYF).

It is found in the membrane. This is an uncharacterized protein from Dictyostelium discoideum (Social amoeba).